We begin with the raw amino-acid sequence, 901 residues long: HTH-type transcriptional regulator MalT (901 aa).

39–46 (SPAGYGKT) contributes to the ATP binding site. The 66-residue stretch at 829-894 (ELIRTSPLTQ…DAVQHAQQLL (66 aa)) folds into the HTH luxR-type domain. Residues 853–872 (NEQIAGELAVAATTIKTHIR) constitute a DNA-binding region (H-T-H motif).

This sequence belongs to the MalT family. In terms of assembly, monomer in solution. Oligomerizes to an active state in the presence of the positive effectors ATP and maltotriose.

Activated by ATP and maltotriose, which are both required for DNA binding. Functionally, positively regulates the transcription of the maltose regulon whose gene products are responsible for uptake and catabolism of malto-oligosaccharides. Specifically binds to the promoter region of its target genes, recognizing a short DNA motif called the MalT box. The polypeptide is HTH-type transcriptional regulator MalT (Salmonella choleraesuis (strain SC-B67)).